The chain runs to 654 residues: Acetyl-coenzyme A synthetase (654 aa).

CoA contacts are provided by residues 191-194 and Thr-315; that span reads RRGQ. Residues 391 to 393, 415 to 420, Asp-506, and Arg-521 contribute to the ATP site; these read GEP and DTWWQT. Ser-529 provides a ligand contact to CoA. Residue Arg-532 coordinates ATP. Residues Val-543, His-545, and Val-548 each coordinate Mg(2+). Lys-615 bears the N6-acetyllysine mark.

This sequence belongs to the ATP-dependent AMP-binding enzyme family. It depends on Mg(2+) as a cofactor. Post-translationally, acetylated. Deacetylation by the SIR2-homolog deacetylase activates the enzyme.

The catalysed reaction is acetate + ATP + CoA = acetyl-CoA + AMP + diphosphate. Functionally, catalyzes the conversion of acetate into acetyl-CoA (AcCoA), an essential intermediate at the junction of anabolic and catabolic pathways. AcsA undergoes a two-step reaction. In the first half reaction, AcsA combines acetate with ATP to form acetyl-adenylate (AcAMP) intermediate. In the second half reaction, it can then transfer the acetyl group from AcAMP to the sulfhydryl group of CoA, forming the product AcCoA. The sequence is that of Acetyl-coenzyme A synthetase from Gemmatimonas aurantiaca (strain DSM 14586 / JCM 11422 / NBRC 100505 / T-27).